We begin with the raw amino-acid sequence, 178 residues long: Translation initiation factor IF-3 (178 aa).

It belongs to the IF-3 family. Monomer.

The protein localises to the cytoplasm. IF-3 binds to the 30S ribosomal subunit and shifts the equilibrium between 70S ribosomes and their 50S and 30S subunits in favor of the free subunits, thus enhancing the availability of 30S subunits on which protein synthesis initiation begins. The polypeptide is Translation initiation factor IF-3 (Legionella pneumophila (strain Paris)).